A 426-amino-acid chain; its full sequence is Protein arginine N-methyltransferase 2 (426 aa).

Disordered stretches follow at residues 65–88 and 155–175; these read DEEEDVKSNGVQTNGDRQTHGQES and DEEMEEDGEQEQEQQDAAVAA. The span at 73-88 shows a compositional bias: polar residues; sequence NGVQTNGDRQTHGQES. The segment covering 155 to 168 has biased composition (acidic residues); the sequence is DEEMEEDGEQEQEQ. The RMT2 domain occupies 207–426; sequence PSVTSSRYLN…YRLPLCKYMD (220 aa). Residues Y214, M243, 263–268, 284–286, 311–312, and D331 each bind S-adenosyl-L-methionine; these read HGMGIV, EAH, and WQ.

It belongs to the class I-like SAM-binding methyltransferase superfamily. RMT2 methyltransferase family. In terms of assembly, monomer.

It is found in the cytoplasm. The protein resides in the nucleus. Its function is as follows. S-adenosyl-L-methionine-dependent protein-arginine N-methyltransferase that methylates the delta-nitrogen atom of arginine residues to form N5-methylarginine (type IV) in target proteins. Monomethylates ribosomal protein L12. This Emericella nidulans (strain FGSC A4 / ATCC 38163 / CBS 112.46 / NRRL 194 / M139) (Aspergillus nidulans) protein is Protein arginine N-methyltransferase 2.